The primary structure comprises 59 residues: Phycobilisome degradation protein NblA (59 aa).

The protein to chloroplast ycf18.

Its function is as follows. Involved in phycobilisome (PBS) degradation during nutrient deprivation. May mark the PBS for degradation by covalent association with PBS components or may disrupt the PBS via ionic interactions. The sequence is that of Phycobilisome degradation protein NblA from Synechococcus elongatus (strain ATCC 33912 / PCC 7942 / FACHB-805) (Anacystis nidulans R2).